The following is a 243-amino-acid chain: Ribosomal RNA small subunit methyltransferase J (243 aa).

S-adenosyl-L-methionine contacts are provided by residues 112-113 (ER) and Asp164.

It belongs to the methyltransferase superfamily. RsmJ family.

The protein localises to the cytoplasm. It catalyses the reaction guanosine(1516) in 16S rRNA + S-adenosyl-L-methionine = N(2)-methylguanosine(1516) in 16S rRNA + S-adenosyl-L-homocysteine + H(+). In terms of biological role, specifically methylates the guanosine in position 1516 of 16S rRNA. The polypeptide is Ribosomal RNA small subunit methyltransferase J (Legionella pneumophila (strain Lens)).